Consider the following 393-residue polypeptide: Chalcone synthase DII (393 aa).

The active site involves Cys-164.

It belongs to the thiolase-like superfamily. Chalcone/stilbene synthases family.

The catalysed reaction is (E)-4-coumaroyl-CoA + 3 malonyl-CoA + 3 H(+) = 2',4,4',6'-tetrahydroxychalcone + 3 CO2 + 4 CoA. Its pathway is secondary metabolite biosynthesis; flavonoid biosynthesis. Its function is as follows. The primary product of this enzyme is 4,2',4',6'-tetrahydroxychalcone (also termed naringenin-chalcone or chalcone) which can under specific conditions spontaneously isomerize into naringenin. The protein is Chalcone synthase DII (CHS-DII) of Ipomoea batatas (Sweet potato).